An 86-amino-acid chain; its full sequence is High affinity immunoglobulin epsilon receptor subunit gamma (86 aa).

The first 18 residues, 1 to 18 (MIPAVVLLLLLLVEQAAA), serve as a signal peptide directing secretion. Residues 19-23 (LGEPQ) are Extracellular-facing. The helical transmembrane segment at 24–44 (LCYILDAILFLYGIVLTLLYC) threads the bilayer. Topologically, residues 45 to 86 (RLKIQVRKAAIASYEKSDGVYTGLSTRNQETYETLKHEKPPQ) are cytoplasmic. The ITAM domain maps to 54 to 82 (AIASYEKSDGVYTGLSTRNQETYETLKHE). Position 65 is a phosphotyrosine (Tyr65). Ser69 is modified (phosphoserine). Tyr76 is subject to Phosphotyrosine. Thr78 is modified (phosphothreonine).

The protein belongs to the CD3Z/FCER1G family. In terms of assembly, igE Fc receptor is a tetramer of an alpha chain, a beta chain, and two disulfide linked gamma chains. Associates with FCGR1A; forms a functional signaling complex. The signaling subunit of immunoglobulin gamma (IgG) Fc receptor complex. As a homodimer or a heterodimer of CD247 and FCER1G, associates with the ligand binding subunit FCGR3A to form a functional receptor complex. Associates with CLEC6A. Interacts with CLEC4E. Interacts (via ITAM domain) with SYK (via SH2 domains); activates SYK, enabling integrin-mediated activation of neutrophils and macrophages. Interacts with CSF2RB and recruits SYK in response to IL3 stimulation; this interaction is direct. Interacts with CD300LH; the interaction may be indirect. Interacts with CD300LD. Interacts with TARM1.

The protein localises to the cell membrane. Its function is as follows. Adapter protein containing an immunoreceptor tyrosine-based activation motif (ITAM) that transduces activation signals from various immunoreceptors. As a component of the high-affinity immunoglobulin E (IgE) receptor, mediates allergic inflammatory signaling in mast cells. As a constitutive component of interleukin-3 receptor complex, selectively mediates interleukin 4/IL4 production by basophils priming T-cells toward effector T-helper 2 subset. Associates with pattern recognition receptors CLEC4D and CLEC4E to form a functional signaling complex in myeloid cells. Binding of mycobacterial trehalose 6,6'-dimycolate (TDM) to this receptor complex leads to phosphorylation of ITAM, triggering activation of SYK, CARD9 and NF-kappa-B, consequently driving maturation of antigen-presenting cells and shaping antigen-specific priming of T-cells toward effector T-helper 1 and T-helper 17 cell subtypes. May function cooperatively with other activating receptors. Functionally linked to integrin beta-2/ITGB2-mediated neutrophil activation. Also involved in integrin alpha-2/ITGA2-mediated platelet activation. This is High affinity immunoglobulin epsilon receptor subunit gamma (FCER1G) from Macaca fascicularis (Crab-eating macaque).